The chain runs to 465 residues: uncharacterized protein (465 aa).

The region spanning 13-71 (GPRPGLRLELQAIDLDRDGHGLARWQGWVVVVPGLLPGERAKVQLQQRQKSRWLSRISE) is the TRAM domain. [4Fe-4S] cluster contacts are provided by cysteine 84, cysteine 90, cysteine 93, and cysteine 171. 4 residues coordinate S-adenosyl-L-methionine: glutamine 294, tyrosine 324, glutamate 345, and aspartate 391. Catalysis depends on cysteine 418, which acts as the Nucleophile.

This sequence belongs to the class I-like SAM-binding methyltransferase superfamily. RNA M5U methyltransferase family.

This is an uncharacterized protein from Parasynechococcus marenigrum (strain WH8102).